The following is a 98-amino-acid chain: Co-chaperonin GroES (98 aa).

Belongs to the GroES chaperonin family. As to quaternary structure, heptamer of 7 subunits arranged in a ring. Interacts with the chaperonin GroEL.

The protein resides in the cytoplasm. Functionally, together with the chaperonin GroEL, plays an essential role in assisting protein folding. The GroEL-GroES system forms a nano-cage that allows encapsulation of the non-native substrate proteins and provides a physical environment optimized to promote and accelerate protein folding. GroES binds to the apical surface of the GroEL ring, thereby capping the opening of the GroEL channel. This is Co-chaperonin GroES from Clavibacter michiganensis subsp. michiganensis (strain NCPPB 382).